We begin with the raw amino-acid sequence, 410 residues long: MYHRNSAPPPPGWSGGYPPPQSQWPPHSYQYPPYPPQGPPPPPAHSYSPPPTYGNYPSPYSTPPPHSPSPYQHPQHGHSRSWTNPSLPPRPPRESQSFGKGAPSNYRFQYSECTGRRRALLIGINYIGQPNQLRGCINDVTNMSTFLHERFGYRREDMVILTDDQKNPMSVPTKINILRAMQWLVKDAQPNDSLFIHFSGHGGRTPDLDGDEEDGYDDVIYPVDYRVAGHIVDDEMHNIMVRPLQPGVRLTAIFDSCHSGTALDLPYVYSTQGILKEPNLAKEAAQDLFSALASYGKGDLSGVAMTAIGFLKKAAIGDSARQRTVMTKTSPADVVMFSGSKDTQTSADTFQDGEARGALSWAFIKSQKQRPNQSYLQLLNSIRAELEGKYTQKPQLSCSHPLDVNLLFVM.

The interval 1–106 (MYHRNSAPPP…SFGKGAPSNY (106 aa)) is disordered. Pro residues-rich tracts occupy residues 7 to 23 (APPPPGWSGGYPPPQSQ) and 32 to 52 (PPYPPQGPPPPPAHSYSPPPT). Residues His-201 and Cys-257 contribute to the active site.

The protein belongs to the peptidase C14B family.

Involved in cell death (apoptosis). This Aspergillus clavatus (strain ATCC 1007 / CBS 513.65 / DSM 816 / NCTC 3887 / NRRL 1 / QM 1276 / 107) protein is Metacaspase-1B (casB).